The primary structure comprises 258 residues: Regulatory protein RecX (258 aa).

This sequence belongs to the RecX family.

It localises to the cytoplasm. Modulates RecA activity. This is Regulatory protein RecX from Streptococcus equi subsp. zooepidemicus (strain MGCS10565).